A 95-amino-acid chain; its full sequence is Large ribosomal subunit protein bL25 (95 aa).

The protein belongs to the bacterial ribosomal protein bL25 family. Part of the 50S ribosomal subunit; part of the 5S rRNA/L5/L18/L25 subcomplex. Contacts the 5S rRNA. Binds to the 5S rRNA independently of L5 and L18.

Its function is as follows. This is one of the proteins that binds to the 5S RNA in the ribosome where it forms part of the central protuberance. The polypeptide is Large ribosomal subunit protein bL25 (Haemophilus ducreyi (strain 35000HP / ATCC 700724)).